The primary structure comprises 275 residues: Holocytochrome c-type synthase (275 aa).

Disordered stretches follow at residues 1–59 (MGLS…KTNS) and 83–102 (KENL…PAPD). Residue G2 is the site of N-myristoyl glycine attachment. Residues 9 to 28 (AASTVQTSTPAASDHQTAAP) show a composition bias toward polar residues. HRM repeat units follow at residues 31–36 (GCPMHE) and 41–46 (GCPVSA). Residues 48–59 (PSDSTCGSKTNS) show a composition bias toward polar residues. A compositionally biased stretch (pro residues) spans 91–102 (LMPPPNQTPAPD).

The protein belongs to the cytochrome c-type heme lyase family.

The protein resides in the mitochondrion inner membrane. Its subcellular location is the membrane. The catalysed reaction is holo-[cytochrome c] = apo-[cytochrome c] + heme b. Its function is as follows. Lyase that catalyzes the covalent linking of the heme group to the cytochrome C apoprotein to produce the mature functional cytochrome. The polypeptide is Holocytochrome c-type synthase (Bos taurus (Bovine)).